The primary structure comprises 514 residues: MSASTSRTLPPEIAESESVMALIERGKADGQIAGDDVRRAFEADQIPPTQWKNVLRSLNQILEEEGVTLMVSAAESPKRARKSVAAKSPVKRTATKTVAAKTTVTRTVAATAAPAVESADAADDAVAAAPAKKTAAKKATAKKAAAKKTTAKKTAAKKSGKQDDEILDGDEAAEEVKAGKGEEEEGEGENKGFVLSDDDEDDAPAQQVAVAGATADPVKDYLKQIGKVPLLNAEQEVELAKRIEAGLFAEDKLANADKLAPKLKRELEIIAEDGRRAKNHLLEANLRLVVSLAKRYTGRGMLFLDLIQEGNLGLIRAVEKFDYTKGYKFSTYATWWIRQAITRAMADQARTIRIPVHMVEVINKLARVQRQMLQDLGREPTPEELAKELDMTPEKVIEVQKYGREPISLHTPLGEDGDSEFGDLIEDSEAVVPADAVSFTLLQEQLHSVLDTLSEREAGVVSMRFGLTDGQPKTLDEIGKVYGVTRERIRQIESKTMSKLRHPSRSQVLRDYLD.

Over residues 135-159 (AAKKATAKKAAAKKTTAKKTAAKKS) the composition is skewed to basic residues. The tract at residues 135-205 (AAKKATAKKA…SDDDEDDAPA (71 aa)) is disordered. The sigma-70 factor domain-2 stretch occupies residues 281 to 351 (LLEANLRLVV…TRAMADQART (71 aa)). Positions 305–308 (DLIQ) match the Interaction with polymerase core subunit RpoC motif. The interval 360–436 (EVINKLARVQ…DSEAVVPADA (77 aa)) is sigma-70 factor domain-3. Residues 449–502 (VLDTLSEREAGVVSMRFGLTDGQPKTLDEIGKVYGVTRERIRQIESKTMSKLRH) form a sigma-70 factor domain-4 region. A DNA-binding region (H-T-H motif) is located at residues 475 to 494 (LDEIGKVYGVTRERIRQIES).

It belongs to the sigma-70 factor family. RpoD/SigA subfamily. In terms of assembly, interacts transiently with the RNA polymerase catalytic core.

The protein resides in the cytoplasm. In terms of biological role, sigma factors are initiation factors that promote the attachment of RNA polymerase to specific initiation sites and are then released. This sigma factor is the primary sigma factor during exponential growth. The polypeptide is RNA polymerase sigma factor SigA (Streptomyces griseus).